A 156-amino-acid polypeptide reads, in one-letter code: E3 ubiquitin-protein ligase LAP (156 aa).

The segment at 1-55 (MSDICWICNDVCDERNNFCGCNEEYKVVHIKCMQLWINYSKKKECNLCKTKYNIK) adopts an RING-CH-type zinc-finger fold. At 1–73 (MSDICWICND…WNWCFNDKKT (73 aa)) the chain is on the cytoplasmic side. Zn(2+)-binding residues include cysteine 5, cysteine 8, cysteine 19, cysteine 21, histidine 29, cysteine 32, cysteine 45, and cysteine 48. The helical transmembrane segment at 74–94 (TLFKIFFILFALVFIFLTITL) threads the bilayer. Residues 95–111 (SNDMANLVTGINDLICS) are Lumenal-facing. A helical transmembrane segment spans residues 112-132 (IIFLIVYTVVMLTSICFSVFV). At 133-156 (VAIVVDFLLEAKEKNSFLTIREIV) the chain is on the cytoplasmic side.

Belongs to the poxviridae LAP protein family.

It localises to the host membrane. The protein localises to the host Golgi apparatus. It is found in the host trans-Golgi network membrane. The protein resides in the host early endosome membrane. The enzyme catalyses S-ubiquitinyl-[E2 ubiquitin-conjugating enzyme]-L-cysteine + [acceptor protein]-L-lysine = [E2 ubiquitin-conjugating enzyme]-L-cysteine + N(6)-ubiquitinyl-[acceptor protein]-L-lysine.. Its function is as follows. E3 ubiquitin-protein ligase which promotes ubiquitination and subsequent degradation of host MHC-I and CD4 molecules, presumably to prevent lysis of infected cells by cytotoxic T-lymphocytes and NK cell. Binds target molecules through transmembrane interaction. The result of this ubiquitination is the enhancement of the endocytosis of the target chain and the delivery to the lysosome, where it is proteolytically destroyed. The polypeptide is E3 ubiquitin-protein ligase LAP (Yaba-like disease virus (YLDV)).